The sequence spans 237 residues: Lectin ConGF (237 aa).

Residues glutamate 8 and aspartate 10 each contribute to the Mn(2+) site. Residues aspartate 10, tyrosine 12, asparagine 14, and aspartate 19 each coordinate Ca(2+). Residue asparagine 14 participates in a carbohydrate binding. 2 residues coordinate Mn(2+): aspartate 19 and histidine 24. Residues leucine 99, tyrosine 100, aspartate 208, and arginine 228 each coordinate a carbohydrate.

It belongs to the leguminous lectin family. In terms of assembly, homotetramer; dimer of dimers. In terms of processing, concanavalin A-like lectins of the Diocleinae subtribe undergo proteolytic processing referred to as circular permutation. The propeptide is split into an N-terminal and a C-terminal part, the gamma and beta chain, respectively. These are then religated in beta-gamma order to form the mature alpha chain. The beta and gamma chains can often be detected in cell extracts. Residues 1-118 of the mature chain, as displayed here, probably constitute the beta chain in the propeptide, residues 119-237 the gamma chain.

Lectin. Induces paw edema in mice. Has a weak vasorelaxant effect on rat aorta. Has anti-inflammatory and anti-nociceptive effects. The protein is Lectin ConGF of Canavalia grandiflora (Jackbean).